Consider the following 253-residue polypeptide: Small ribosomal subunit protein eS6 (253 aa).

Residues 200–253 form a disordered region; it reads KKRLAKRKQSENDYAKLLAQRKKESKVRRQEELKRRRSASMRDSKSSDKSAPQK. The segment covering 226 to 247 has biased composition (basic and acidic residues); that stretch reads VRRQEELKRRRSASMRDSKSSD.

It belongs to the eukaryotic ribosomal protein eS6 family. Component of the small ribosomal subunit. Part of the small subunit (SSU) processome, composed of more than 70 proteins and the RNA chaperone small nucleolar RNA (snoRNA) U3. Post-translationally, ribosomal protein S6 is the major substrate of protein kinases in eukaryote ribosomes.

It localises to the cytoplasm. It is found in the nucleus. The protein localises to the nucleolus. In terms of biological role, component of the 40S small ribosomal subunit. Plays an important role in controlling cell growth and proliferation through the selective translation of particular classes of mRNA. Part of the small subunit (SSU) processome, first precursor of the small eukaryotic ribosomal subunit. During the assembly of the SSU processome in the nucleolus, many ribosome biogenesis factors, an RNA chaperone and ribosomal proteins associate with the nascent pre-rRNA and work in concert to generate RNA folding, modifications, rearrangements and cleavage as well as targeted degradation of pre-ribosomal RNA by the RNA exosome. This is Small ribosomal subunit protein eS6 (RpS6) from Spodoptera frugiperda (Fall armyworm).